Consider the following 313-residue polypeptide: Methionyl-tRNA formyltransferase (313 aa).

110–113 (SLLP) serves as a coordination point for (6S)-5,6,7,8-tetrahydrofolate.

This sequence belongs to the Fmt family.

The catalysed reaction is L-methionyl-tRNA(fMet) + (6R)-10-formyltetrahydrofolate = N-formyl-L-methionyl-tRNA(fMet) + (6S)-5,6,7,8-tetrahydrofolate + H(+). Its function is as follows. Attaches a formyl group to the free amino group of methionyl-tRNA(fMet). The formyl group appears to play a dual role in the initiator identity of N-formylmethionyl-tRNA by promoting its recognition by IF2 and preventing the misappropriation of this tRNA by the elongation apparatus. The sequence is that of Methionyl-tRNA formyltransferase from Lysinibacillus sphaericus (strain C3-41).